The chain runs to 668 residues: Spartin (668 aa).

Met1 is subject to N-acetylmethionine. Residues 16–94 (IKEAYKKAFV…LQNVRTRLEI (79 aa)) enclose the MIT domain. The segment at 110-176 (VPKLYPEFPP…PSEAPPAYTP (67 aa)) is disordered. Residues 118–127 (PPKDMSEKSP) are compositionally biased toward basic and acidic residues. Ser126 is modified (phosphoserine). Low complexity predominate over residues 128 to 162 (EPQSLSSLPQHSEVNGSTSTASAESSSTPTTLSLP). Positions 190–380 (ESGEFSSVGE…QLDPSSKDVR (191 aa)) are ubiquitin-binding region (UBR) domain. The LC3-interacting region (LIR); mediates interaction with MAP1LC3A AND MAP1LC3C signature appears at 193 to 200 (EFSSVGEN). A disordered region spans residues 348–396 (FQIPGISGSASDQLKEASGTDVRQLDPSSKDVRQKGKRGKKTKGTSSEE). Residue Lys362 forms a Glycyl lysine isopeptide (Lys-Gly) (interchain with G-Cter in ubiquitin) linkage. A Senescence domain is found at 427–611 (ILSGASWVSW…YNIDNIGIKA (185 aa)). Residues 431–503 (ASWVSWGLVK…LVDGVCTVAN (73 aa)) form a required for localization to lipid droplets region. The residue at position 470 (Ser470) is a Phosphoserine. Residues 631-668 (IDNSKGENPGGGASANLKGEKDEQKEGPEKNGAKKKDK) form a disordered region. Residues 648–668 (KGEKDEQKEGPEKNGAKKKDK) show a composition bias toward basic and acidic residues.

Interacts with ITCH and WWP1. Interacts (via MIT domain) with IST1; leading to the recruitment of SPART to midbodies. Interacts with MAP1LC3A and MAP1LC3C. In terms of processing, ubiquitinated; ubiquitination does not require ITCH and WWP1.

The protein localises to the cytoplasm. It is found in the midbody. The protein resides in the lipid droplet. Lipophagy receptor that plays an important role in lipid droplet (LD) turnover in motor neurons. Localizes to LDs and interacts with components of the autophagy machinery, such as MAP1LC3A/C proteins to deliver LDs to autophagosomes for degradation via lipophagy. Lipid transfer protein required for lipid droplet degradation, including by lipophagy. Can bind and transfer all lipid species found in lipid droplets, from phospholipids to triglycerides and sterol esters but the direction of lipid transfer by spartin and its cargos are unknown. May be implicated in endosomal trafficking, or microtubule dynamics, or both. Participates in cytokinesis. The polypeptide is Spartin (Bos taurus (Bovine)).